The primary structure comprises 174 residues: Eukaryotic translation elongation factor 1 epsilon-1 (174 aa).

Position 2 is an N-acetylalanine (A2). Residues 2–56 (AAAAELKLLEKSLGLRPGNKYSAQGERQIPVLQTNNGPSLTGLATIATHLVKQAS) form an N-terminal region. The region spanning 50–173 (HLVKQASKEH…FIKNRLYANS (124 aa)) is the GST C-terminal domain. Residues 57–63 (KEHLLGS) are linker. The C-terminal stretch occupies residues 64–152 (TAEEKALVQQ…SRWFCHIQHY (89 aa)). K138 carries the N6-acetyllysine modification. A coiled-coil region spans residues 153-169 (PDIRQHLSSVVFIKNRL).

Part of a multisubunit complex that groups tRNA ligases for Arg (RARS1), Asp (DARS1), Gln (QARS1), Ile (IARS1), Leu (LARS1), Lys (KARS1), Met (MARS1) the bifunctional ligase for Glu and Pro (EPRS1) and the auxiliary subunits AIMP1/p43, AIMP2/p38 and EEF1E1/p18. Can interact simultaneously with MARS1 and EPRS1. Forms a linear complex that contains MARS1, EEF1E1, EPRS1 and AIMP2 that is at the core of the multisubunit complex. Interacts with ATM and ATR. The interaction with ATM, which takes place independently of TP53, is induced by DNA damage that may occur during genotoxic stress or cell growth. The interaction with ATR is enhanced by UV irradiation.

It localises to the cytoplasm. The protein localises to the nucleus. Its function is as follows. Positive modulator of ATM response to DNA damage. The polypeptide is Eukaryotic translation elongation factor 1 epsilon-1 (EEF1E1) (Cricetulus griseus (Chinese hamster)).